Reading from the N-terminus, the 496-residue chain is Acyltransferase M4 (496 aa).

His-163 functions as the Proton acceptor in the catalytic mechanism.

Belongs to the plant acyltransferase family. In terms of assembly, monomer.

Its pathway is secondary metabolite biosynthesis. Acyltransferase; part of the gene cluster that mediates the biosynthesis of squalestatin S1 (SQS1, also known as zaragozic acid A), a heavily oxidized fungal polyketide that offers potent cholesterol lowering activity by targeting squalene synthase (SS). SQS1 is composed of a 2,8-dioxobicyclic[3.2.1]octane-3,4,5-tricarboxyclic acid core that is connected to two lipophilic polyketide arms. These initial steps feature the priming of an unusual benzoic acid starter unit onto the highly reducing polyketide synthase pks2, followed by oxaloacetate extension and product release to generate a tricarboxylic acid containing product. The phenylalanine ammonia lyase (PAL) M7 and the acyl-CoA ligase M9 are involved in transforming phenylalanine into benzoyl-CoA. The citrate synthase-like protein R3 is involved in connecting the C-alpha-carbons of the hexaketide chain and oxaloacetate to afford the tricarboxylic acid unit. The potential hydrolytic enzymes, M8 and M10, are in close proximity to pks2 and may participate in product release. On the other side, the tetraketide arm is synthesized by a the squalestatin tetraketide synthase pks1 and enzymatically esterified to the core in the last biosynthetic step, by the acetyltransferase M4. The biosynthesis of the tetraketide must involve 3 rounds of chain extension. After the first and second rounds methyl-transfer occurs, and in all rounds of extension the ketoreductase and dehydratase are active. The enoyl reductase and C-MeT of pks1 are not active in the final round of extension. The acetyltransferase M4 appears to have a broad substrate selectivity for its acyl CoA substrate, allowing the in vitro synthesis of novel squalestatins. The biosynthesis of SQS1 requires several oxidative steps likely performed by oxidoreductases M1, R1 and R2. Finally, in support of the identification of the cluster as being responsible for SQS1 production, the cluster contains a gene encoding a putative squalene synthase (SS) R6, suggesting a likely mechanism for self-resistance. This is Acyltransferase M4 from Phoma sp. (strain ATCC 20986 / MF5453).